The primary structure comprises 182 residues: Translation initiation factor IF-3, chloroplastic (182 aa).

The protein belongs to the IF-3 family. As to quaternary structure, monomer.

It is found in the plastid. It localises to the chloroplast. Functionally, IF-3 binds to the 30S ribosomal subunit and shifts the equilibrium between 70S ribosomes and their 50S and 30S subunits in favor of the free subunits, thus enhancing the availability of 30S subunits on which protein synthesis initiation begins. The sequence is that of Translation initiation factor IF-3, chloroplastic from Porphyra purpurea (Red seaweed).